The primary structure comprises 223 residues: Phosphoribosylformylglycinamidine synthase subunit PurQ (223 aa).

Residues 4-223 (FAVVVFPGTN…FRSMVEWARK (220 aa)) form the Glutamine amidotransferase type-1 domain. The Nucleophile role is filled by cysteine 85. Catalysis depends on residues histidine 196 and glutamate 198.

Part of the FGAM synthase complex composed of 1 PurL, 1 PurQ and 2 PurS subunits.

The protein localises to the cytoplasm. It carries out the reaction N(2)-formyl-N(1)-(5-phospho-beta-D-ribosyl)glycinamide + L-glutamine + ATP + H2O = 2-formamido-N(1)-(5-O-phospho-beta-D-ribosyl)acetamidine + L-glutamate + ADP + phosphate + H(+). It catalyses the reaction L-glutamine + H2O = L-glutamate + NH4(+). It functions in the pathway purine metabolism; IMP biosynthesis via de novo pathway; 5-amino-1-(5-phospho-D-ribosyl)imidazole from N(2)-formyl-N(1)-(5-phospho-D-ribosyl)glycinamide: step 1/2. Functionally, part of the phosphoribosylformylglycinamidine synthase complex involved in the purines biosynthetic pathway. Catalyzes the ATP-dependent conversion of formylglycinamide ribonucleotide (FGAR) and glutamine to yield formylglycinamidine ribonucleotide (FGAM) and glutamate. The FGAM synthase complex is composed of three subunits. PurQ produces an ammonia molecule by converting glutamine to glutamate. PurL transfers the ammonia molecule to FGAR to form FGAM in an ATP-dependent manner. PurS interacts with PurQ and PurL and is thought to assist in the transfer of the ammonia molecule from PurQ to PurL. The chain is Phosphoribosylformylglycinamidine synthase subunit PurQ from Thermococcus kodakarensis (strain ATCC BAA-918 / JCM 12380 / KOD1) (Pyrococcus kodakaraensis (strain KOD1)).